Reading from the N-terminus, the 308-residue chain is Putative ankyrin repeat protein R835 (308 aa).

ANK repeat units lie at residues 100 to 129, 152 to 181, 190 to 217, 218 to 247, 249 to 277, and 279 to 305; these read DINE…NIDL, PMNK…YVDF, SEYT…GANY, KSSY…DLEK, GLRS…EIDY, and YYIY…SKQI.

The sequence is that of Putative ankyrin repeat protein R835 from Acanthamoeba polyphaga (Amoeba).